The primary structure comprises 233 residues: H-2 class II histocompatibility antigen, A-S alpha chain (233 aa).

The segment at 1–88 is alpha-1; the sequence is EDDIEADHVG…KRSNSTPATN (88 aa). Over 1-195 the chain is Extracellular; it reads EDDIEADHVG…IPAPMSELTE (195 aa). The alpha-2 stretch occupies residues 89-182; it reads EAPQATVFPK…GLEEPVLKHW (94 aa). The region spanning 91-183 is the Ig-like C1-type domain; the sequence is PQATVFPKSP…LEEPVLKHWE (93 aa). Cys111 and Cys167 form a disulfide bridge. An N-linked (GlcNAc...) asparagine glycan is attached at Asn122. The segment at 183–195 is connecting peptide; the sequence is EPEIPAPMSELTE. A helical transmembrane segment spans residues 196 to 221; it reads TVVCALGLSVGLVGIVVGTIFIIQGL. Over 222–233 the chain is Cytoplasmic; that stretch reads RSGGTSRHPGPL.

It belongs to the MHC class II family.

Its subcellular location is the membrane. In Mus musculus (Mouse), this protein is H-2 class II histocompatibility antigen, A-S alpha chain (H2-Aa).